Here is a 395-residue protein sequence, read N- to C-terminus: MANDYLFTSESVSEGHPDKVADQISDAILDAILEQDKYSRVAAETLCNTGLVVLAGEITTTANIDYIQIARDTIKRIGYDNTDYGIDYKGCAVLVAYDKQSPDIAQGVDRAHDDNLDQGAGDQGLMFGYACDETPELMPLPIYLSHRLVERQASLRRDGRLQWLRPDAKSQVTVRYVDGKPDSIDTVVLSTQHAPDIELPALREAVIEEIIKPTLPAELIKGDIKFLVNPTGRFVIGGPQGDCGLTGRKIIVDTYGGAAPHGGGAFSGKDPSKVDRSAAYAGRYVAKNIVAAGLASRALIQVSYAIGVAEPTSVMVNTFGTGRVSDAVITKLVREHFDLRPKGIIKMLDLLRPIYEKTAAYGHFGREEPEFSWEATDKALALAEAAGVEPTARVA.

Residue His-16 participates in ATP binding. Asp-18 is a Mg(2+) binding site. Glu-44 lines the K(+) pocket. Residues Glu-57 and Gln-100 each coordinate L-methionine. The segment at 100–110 is flexible loop; it reads QSPDIAQGVDR. ATP contacts are provided by residues 167 to 169, 233 to 234, Asp-242, 248 to 249, Ala-265, and Lys-269; these read DAK, RF, and RK. Asp-242 lines the L-methionine pocket. L-methionine is bound at residue Lys-273.

Belongs to the AdoMet synthase family. In terms of assembly, homotetramer; dimer of dimers. Requires Mg(2+) as cofactor. K(+) is required as a cofactor.

It is found in the cytoplasm. The catalysed reaction is L-methionine + ATP + H2O = S-adenosyl-L-methionine + phosphate + diphosphate. It participates in amino-acid biosynthesis; S-adenosyl-L-methionine biosynthesis; S-adenosyl-L-methionine from L-methionine: step 1/1. Functionally, catalyzes the formation of S-adenosylmethionine (AdoMet) from methionine and ATP. The overall synthetic reaction is composed of two sequential steps, AdoMet formation and the subsequent tripolyphosphate hydrolysis which occurs prior to release of AdoMet from the enzyme. This Burkholderia cenocepacia (strain HI2424) protein is S-adenosylmethionine synthase.